A 362-amino-acid chain; its full sequence is 3-dehydroquinate synthase (362 aa).

NAD(+)-binding positions include 71–76 (DGEQYK), 105–109 (GVVGD), 129–130 (TT), Lys-142, Lys-151, and 169–172 (CLKT). Residues Glu-184, His-247, and His-264 each coordinate Zn(2+).

It belongs to the sugar phosphate cyclases superfamily. Dehydroquinate synthase family. Co(2+) serves as cofactor. Zn(2+) is required as a cofactor. Requires NAD(+) as cofactor.

It is found in the cytoplasm. It carries out the reaction 7-phospho-2-dehydro-3-deoxy-D-arabino-heptonate = 3-dehydroquinate + phosphate. It participates in metabolic intermediate biosynthesis; chorismate biosynthesis; chorismate from D-erythrose 4-phosphate and phosphoenolpyruvate: step 2/7. Its function is as follows. Catalyzes the conversion of 3-deoxy-D-arabino-heptulosonate 7-phosphate (DAHP) to dehydroquinate (DHQ). This is 3-dehydroquinate synthase from Escherichia coli (strain K12 / MC4100 / BW2952).